Reading from the N-terminus, the 489-residue chain is Oxysterol-binding protein-related protein 1B (489 aa).

Belongs to the OSBP family. In terms of tissue distribution, expressed at low levels in flowers.

May be involved in the transport of sterols. In Arabidopsis thaliana (Mouse-ear cress), this protein is Oxysterol-binding protein-related protein 1B (ORP1B).